The following is a 228-amino-acid chain: Uracil-DNA glycosylase (228 aa).

The active-site Proton acceptor is the aspartate 64.

Belongs to the uracil-DNA glycosylase (UDG) superfamily. UNG family.

The protein resides in the cytoplasm. The enzyme catalyses Hydrolyzes single-stranded DNA or mismatched double-stranded DNA and polynucleotides, releasing free uracil.. Functionally, excises uracil residues from the DNA which can arise as a result of misincorporation of dUMP residues by DNA polymerase or due to deamination of cytosine. The polypeptide is Uracil-DNA glycosylase (Yersinia pseudotuberculosis serotype O:1b (strain IP 31758)).